A 166-amino-acid chain; its full sequence is MRCPFCGHDDTQVKDSRSTEDGVAIRRRRVCSACTQRFTTVERVQLRELSVTKADGRRVPFDRDKLARSIRVALRKRPVPEERQERLVNGLVRQLEASGEHEISSHRIGQLAMDALREVDGVAYVRFTSVYRDFREVEAFSKILADMKPIPGETDTPSPDDSQETP.

Residues 3–34 (CPFCGHDDTQVKDSRSTEDGVAIRRRRVCSAC) fold into a zinc finger. One can recognise an ATP-cone domain in the interval 49 to 139 (LSVTKADGRR…VYRDFREVEA (91 aa)). Positions 146–166 (DMKPIPGETDTPSPDDSQETP) are disordered.

The protein belongs to the NrdR family. The cofactor is Zn(2+).

Its function is as follows. Negatively regulates transcription of bacterial ribonucleotide reductase nrd genes and operons by binding to NrdR-boxes. The polypeptide is Transcriptional repressor NrdR (Gluconobacter oxydans (strain 621H) (Gluconobacter suboxydans)).